The sequence spans 271 residues: MSDMRLIVAGAGGRMGRALTRAIAESKGAVLAGALEAPGSEMLGKDAGVLAGLPANGIKLSADLWAMSKEADGILDFTVPAATIANVAIAAERGIVHVIGTTGLSGSDNAVIKSVTNRAVVVQSGNMSLGVNLLAAVVKRVAKALDQSFDIEIVETHHRMKIDAPSGTALMLGQAAAAGRGISLDEHADRGRDGITGARKPGNIGFASLRGGTAAGDHSVSFLGPFERLTLSHQAEDRMLFAHGALKAALWAHGKKPGHYSMADVLGLADI.

NAD(+) is bound by residues 10–15 (GAGGRM), Glu-36, 100–102 (GTT), and 124–127 (SGNM). Catalysis depends on His-157, which acts as the Proton donor/acceptor. Position 158 (His-158) interacts with (S)-2,3,4,5-tetrahydrodipicolinate. The active-site Proton donor is Lys-161. 167-168 (GT) lines the (S)-2,3,4,5-tetrahydrodipicolinate pocket.

Belongs to the DapB family.

It localises to the cytoplasm. The catalysed reaction is (S)-2,3,4,5-tetrahydrodipicolinate + NAD(+) + H2O = (2S,4S)-4-hydroxy-2,3,4,5-tetrahydrodipicolinate + NADH + H(+). It carries out the reaction (S)-2,3,4,5-tetrahydrodipicolinate + NADP(+) + H2O = (2S,4S)-4-hydroxy-2,3,4,5-tetrahydrodipicolinate + NADPH + H(+). It functions in the pathway amino-acid biosynthesis; L-lysine biosynthesis via DAP pathway; (S)-tetrahydrodipicolinate from L-aspartate: step 4/4. Catalyzes the conversion of 4-hydroxy-tetrahydrodipicolinate (HTPA) to tetrahydrodipicolinate. This chain is 4-hydroxy-tetrahydrodipicolinate reductase, found in Bradyrhizobium diazoefficiens (strain JCM 10833 / BCRC 13528 / IAM 13628 / NBRC 14792 / USDA 110).